The chain runs to 62 residues: Venom peptide 6 (62 aa).

The first 26 residues, 1 to 26 (MKSTSVFILFAGIAIMACLQMTGTEA), serve as a signal peptide directing secretion. 3 AXPX repeats span residues 26–29 (AAPS), 30–33 (ASPN), and 40–43 (ADPD). The propeptide occupies 27–46 (APSASPNPTPVARADPDPEA).

This sequence belongs to the MCD family. In terms of tissue distribution, expressed by the venom gland.

Its subcellular location is the secreted. The protein resides in the target cell membrane. In terms of biological role, antimicrobial peptide with strong activity against the fungus B.cinerea (MIC=5 uM) and the Gram-positive bacterium S.aureus (MIC=50 uM), and no activity against C.albicans (MIC&gt;200 uM), and the Gram-negative bacterium E.coli (MIC&gt;200 uM). Shows cytolytic activity against insect cell lines. Has no hemolytic activity against human erythrocytes. In vivo, peptide injection in the vicinity of the head and thorax of lepidopteran larvae induces feeding disorder that lasts one or two days before recovering. The polypeptide is Venom peptide 6 (Eumenes pomiformis (Potter wasp)).